We begin with the raw amino-acid sequence, 377 residues long: N-acetylgalactosamine-6-phosphate deacetylase (377 aa).

Glu125 contacts a divalent metal cation. 136-137 (AH) provides a ligand contact to substrate. Residues His191 and His212 each coordinate a divalent metal cation. Substrate-binding positions include 215-216 (NG), Arg223, and 244-247 (DGHH). Residue Asp269 is the Proton donor/acceptor of the active site. 302 to 304 (LAG) lines the substrate pocket.

Belongs to the metallo-dependent hydrolases superfamily. NagA family. The cofactor is a divalent metal cation.

The catalysed reaction is N-acetyl-D-galactosamine 6-phosphate + H2O = D-galactosamine 6-phosphate + acetate. Functionally, catalyzes the deacetylation of N-acetyl-D-galactosamine 6-phosphate to D-galactosamine 6-phosphate. Can probably also catalyze the deacetylation of N-acetyl-D-glucosamine 6-phosphate to D-glucosamine 6-phosphate. The polypeptide is N-acetylgalactosamine-6-phosphate deacetylase (agaA) (Escherichia coli O157:H7).